Here is a 267-residue protein sequence, read N- to C-terminus: MKHVKAVIFDWAGTVVDYGSLAPMGAFVETFEQFGVSITIDEARGPMGMAKRPHIAALMALPRVAQAWADKYGHAPGEADIDAVYDVFVPKNIAVAASYSSVIPGVADVASALRSDDIRIGTTTGYTREIMAEIVPGAAAQGFSPDSIVCTGDTPEGRPSPYMIYKTLPELGVWRAKDAIKVDDTEVGIEEGINGGTWAVGVAVSGNAFGMAENDVKALAPHEFAWRRKAATEKLKAAGAHYVIDSVADLMPVVYDIEARLARGERP.

The Nucleophile role is filled by aspartate 10. Positions 10 and 12 each coordinate Mg(2+). Lysine 51 serves as the catalytic Schiff-base intermediate with substrate. Position 184 (aspartate 184) interacts with Mg(2+).

The protein belongs to the HAD-like hydrolase superfamily. PhnX family. In terms of assembly, homodimer. Mg(2+) is required as a cofactor.

It carries out the reaction phosphonoacetaldehyde + H2O = acetaldehyde + phosphate + H(+). Involved in phosphonate degradation. In Paraburkholderia phytofirmans (strain DSM 17436 / LMG 22146 / PsJN) (Burkholderia phytofirmans), this protein is Phosphonoacetaldehyde hydrolase.